Reading from the N-terminus, the 203-residue chain is MIGRLRGIIIEKQPPLVLIEVGGVGYEVHMPMTCFYELPEAGQEAIVFTHFVVREDAQLLYGFNNKQERTLFKELIKTNGVGPKLALAILSGMSAQQFVNAVEREEVGALVKLPGIGKKTAERLIVEMKDRFKGLHGDLFTPAADLVLTSPASPATDDAEQEAVAALVALGYKPQEASRMVSKIARPDASSETLIREALRAAL.

The interval 1-64 (MIGRLRGIII…EDAQLLYGFN (64 aa)) is domain I. The domain II stretch occupies residues 65–142 (NKQERTLFKE…KGLHGDLFTP (78 aa)). Positions 143-154 (AADLVLTSPASP) are flexible linker. The interval 155-203 (ATDDAEQEAVAALVALGYKPQEASRMVSKIARPDASSETLIREALRAAL) is domain III.

It belongs to the RuvA family. Homotetramer. Forms an RuvA(8)-RuvB(12)-Holliday junction (HJ) complex. HJ DNA is sandwiched between 2 RuvA tetramers; dsDNA enters through RuvA and exits via RuvB. An RuvB hexamer assembles on each DNA strand where it exits the tetramer. Each RuvB hexamer is contacted by two RuvA subunits (via domain III) on 2 adjacent RuvB subunits; this complex drives branch migration. In the full resolvosome a probable DNA-RuvA(4)-RuvB(12)-RuvC(2) complex forms which resolves the HJ.

Its subcellular location is the cytoplasm. Its function is as follows. The RuvA-RuvB-RuvC complex processes Holliday junction (HJ) DNA during genetic recombination and DNA repair, while the RuvA-RuvB complex plays an important role in the rescue of blocked DNA replication forks via replication fork reversal (RFR). RuvA specifically binds to HJ cruciform DNA, conferring on it an open structure. The RuvB hexamer acts as an ATP-dependent pump, pulling dsDNA into and through the RuvAB complex. HJ branch migration allows RuvC to scan DNA until it finds its consensus sequence, where it cleaves and resolves the cruciform DNA. This Shigella boydii serotype 18 (strain CDC 3083-94 / BS512) protein is Holliday junction branch migration complex subunit RuvA.